Reading from the N-terminus, the 229-residue chain is Potassium/proton antiporter CemA (229 aa).

Helical transmembrane passes span 7 to 27, 114 to 134, 154 to 174, and 189 to 209; these read LIPL…SLSF, IICF…LVIL, ILLL…ELMI, and IISG…KYWI.

The protein belongs to the CemA family.

Its subcellular location is the plastid. The protein resides in the chloroplast inner membrane. It carries out the reaction K(+)(in) + H(+)(out) = K(+)(out) + H(+)(in). Contributes to K(+)/H(+) antiport activity by supporting proton efflux to control proton extrusion and homeostasis in chloroplasts in a light-dependent manner to modulate photosynthesis. Prevents excessive induction of non-photochemical quenching (NPQ) under continuous-light conditions. Indirectly promotes efficient inorganic carbon uptake into chloroplasts. The chain is Potassium/proton antiporter CemA from Fagus sylvatica (Beechnut).